Consider the following 608-residue polypeptide: Thiol:disulfide interchange protein DsbD (608 aa).

Residues 1–22 (MKNLLSLCFLMLAAFTLNPAAA) form the signal peptide. An intrachain disulfide couples Cys135 to Cys141. The segment covering 161–173 (SAPSSDAAQQTNE) has biased composition (polar residues). Residues 161–180 (SAPSSDAAQQTNEGEVKKSE) are disordered. Helical transmembrane passes span 194–214 (LLTL…PCVF), 241–261 (FFYV…VAMA), 273–293 (IVLI…FGVF), 314–334 (GGSI…ASPC), 352–372 (VVLG…PLLI), 387–407 (WMNI…VFLL), 414–434 (VASQ…FYVA), and 456–476 (SLVI…LIYP). Cys212 and Cys334 are oxidised to a cystine. The Thioredoxin domain occupies 469–608 (LAYQLIYPSS…FSAHVKSIFK (140 aa)). Cysteines 522 and 525 form a disulfide.

This sequence belongs to the thioredoxin family. DsbD subfamily.

Its subcellular location is the cell inner membrane. It carries out the reaction [protein]-dithiol + NAD(+) = [protein]-disulfide + NADH + H(+). The enzyme catalyses [protein]-dithiol + NADP(+) = [protein]-disulfide + NADPH + H(+). Its function is as follows. Required to facilitate the formation of correct disulfide bonds in some periplasmic proteins and for the assembly of the periplasmic c-type cytochromes. Acts by transferring electrons from cytoplasmic thioredoxin to the periplasm. This transfer involves a cascade of disulfide bond formation and reduction steps. This chain is Thiol:disulfide interchange protein DsbD, found in Colwellia psychrerythraea (strain 34H / ATCC BAA-681) (Vibrio psychroerythus).